The sequence spans 335 residues: Mesoderm-specific transcript homolog protein (335 aa).

A run of 2 helical transmembrane segments spans residues 13–33 (WWVQ…HIPP) and 63–83 (VGVV…TSSY). The AB hydrolase-1 domain occupies 71-310 (IVVLLHGFPT…PRSTVSILDD (240 aa)). Positions 98 to 103 (RVIALD) match the RVIALD motif. N163 carries an N-linked (GlcNAc...) asparagine glycan. Residues 266-286 (VGALASVTIPIHFIYGPLDPV) form a helical membrane-spanning segment.

It belongs to the AB hydrolase superfamily. As to expression, highly expressed in hydatidiform moles, but barely expressed in dermoid cysts. Biallelic expression is detected in blood lymphocytes. Seems to imprinted in an isoform-specific manner rather than in a tissue-specific manner in lymphocytes. Isoform 1 is expressed only from the paternal allele. Isoform 2 is expressed from both the paternal allele and the maternal allele.

Its subcellular location is the endoplasmic reticulum membrane. The sequence is that of Mesoderm-specific transcript homolog protein (MEST) from Homo sapiens (Human).